Consider the following 629-residue polypeptide: G1-specific transcription factors activator MSA1 (629 aa).

Basic residues predominate over residues 1-11 (MDKSMIKKRGR). Disordered stretches follow at residues 1–60 (MDKS…KRRL), 83–106 (STPT…NDSY), 217–286 (YCDT…SSLQ), 455–485 (VQVQ…NMNS), and 586–629 (PNLH…IDDQ). The span at 21-37 (PLQSPMAHSSMQVQKQG) shows a compositional bias: polar residues. Positions 245 to 260 (IETSASPIGSARNNNI) are enriched in polar residues. Low complexity-rich tracts occupy residues 261–277 (LLSQ…QLKP) and 455–475 (VQVQ…RQFQ). Ser-268 is modified (phosphoserine). Residues 614–629 (KQDDARTALKRLIDDQ) show a composition bias toward basic and acidic residues.

In terms of assembly, interacts with transcription complexes SCB-binding factor (SBF) and MCB-binding factor (MBF) at their target promoters. Interacts with MBP1 and SWI6. Phosphorylated by CDC28.

Activator of G1-specific transcription factors, MBF and SBF. Promotes both the timing of G1-specific gene transcription and cell cycle initiation. Associates with SBF- and MBF-regulated target promoters and this binding is maximal during the G1 phase, prior to maximum budding. Affects cell cycle initiation by advancing the timing of transcription of G1-specific genes. Overexpression advances the timing of SBF-dependent transcription and budding. Depletion delays both indicators of cell cycle initiation. The protein is G1-specific transcription factors activator MSA1 (MSA1) of Saccharomyces cerevisiae (strain ATCC 204508 / S288c) (Baker's yeast).